Here is a 243-residue protein sequence, read N- to C-terminus: MIIIPARLKSSRFENKVLEDIFGLPMVVRCAKNANLVDECVVACDDESIMQTCQKFHIKAVLTSKHHNSGTERCLEAARILGLKNDERVLNLQGDEPFLEKEVILALLEATKNAPFMATCAKVIDEEQAKSPNLVKVVLDSQNNALYFSRSLIPFLRDFDAKRQTPLLGHIGIYGFHNKEILEELCALKPCVLEEIEKLEQLRALYYQKKIAVKIVQSESVGIDTQEDLQNALKIFSPDLLER.

Belongs to the KdsB family.

The protein localises to the cytoplasm. The enzyme catalyses 3-deoxy-alpha-D-manno-oct-2-ulosonate + CTP = CMP-3-deoxy-beta-D-manno-octulosonate + diphosphate. Its pathway is nucleotide-sugar biosynthesis; CMP-3-deoxy-D-manno-octulosonate biosynthesis; CMP-3-deoxy-D-manno-octulosonate from 3-deoxy-D-manno-octulosonate and CTP: step 1/1. The protein operates within bacterial outer membrane biogenesis; lipopolysaccharide biosynthesis. Activates KDO (a required 8-carbon sugar) for incorporation into bacterial lipopolysaccharide in Gram-negative bacteria. This Helicobacter pylori (strain ATCC 700392 / 26695) (Campylobacter pylori) protein is 3-deoxy-manno-octulosonate cytidylyltransferase.